A 224-amino-acid chain; its full sequence is Large ribosomal subunit protein uL3 (224 aa).

The segment at 132–153 is disordered; it reads SQTKTHGTHEYQRHPGAIGQRK.

It belongs to the universal ribosomal protein uL3 family. As to quaternary structure, part of the 50S ribosomal subunit. Forms a cluster with proteins L14 and L19.

Functionally, one of the primary rRNA binding proteins, it binds directly near the 3'-end of the 23S rRNA, where it nucleates assembly of the 50S subunit. This is Large ribosomal subunit protein uL3 from Myxococcus xanthus (strain DK1622).